Here is a 184-residue protein sequence, read N- to C-terminus: Large ribosomal subunit protein uL6 (184 aa).

It belongs to the universal ribosomal protein uL6 family. In terms of assembly, part of the 50S ribosomal subunit.

In terms of biological role, this protein binds to the 23S rRNA, and is important in its secondary structure. It is located near the subunit interface in the base of the L7/L12 stalk, and near the tRNA binding site of the peptidyltransferase center. This Pyrococcus furiosus (strain ATCC 43587 / DSM 3638 / JCM 8422 / Vc1) protein is Large ribosomal subunit protein uL6.